Reading from the N-terminus, the 145-residue chain is 3-hydroxyacyl-[acyl-carrier-protein] dehydratase FabZ (145 aa).

Residue His-49 is part of the active site.

The protein belongs to the thioester dehydratase family. FabZ subfamily.

The protein resides in the cytoplasm. The catalysed reaction is a (3R)-hydroxyacyl-[ACP] = a (2E)-enoyl-[ACP] + H2O. Its function is as follows. Involved in unsaturated fatty acids biosynthesis. Catalyzes the dehydration of short chain beta-hydroxyacyl-ACPs and long chain saturated and unsaturated beta-hydroxyacyl-ACPs. The protein is 3-hydroxyacyl-[acyl-carrier-protein] dehydratase FabZ of Ehrlichia ruminantium (strain Welgevonden).